Consider the following 138-residue polypeptide: Large ribosomal subunit protein bL19 (138 aa).

This sequence belongs to the bacterial ribosomal protein bL19 family.

Functionally, this protein is located at the 30S-50S ribosomal subunit interface and may play a role in the structure and function of the aminoacyl-tRNA binding site. This Rickettsia conorii (strain ATCC VR-613 / Malish 7) protein is Large ribosomal subunit protein bL19.